A 228-amino-acid chain; its full sequence is Cytidylate kinase (228 aa).

17–25 (GPTASGKGT) serves as a coordination point for ATP.

It belongs to the cytidylate kinase family. Type 1 subfamily.

The protein localises to the cytoplasm. The catalysed reaction is CMP + ATP = CDP + ADP. It carries out the reaction dCMP + ATP = dCDP + ADP. This Burkholderia ambifaria (strain MC40-6) protein is Cytidylate kinase.